The chain runs to 652 residues: DNA ligase (652 aa).

Residues 29–33 (DSEYD), 78–79 (SL), and E107 each bind NAD(+). K109 acts as the N6-AMP-lysine intermediate in catalysis. NAD(+) contacts are provided by R130, E164, K278, and K302. Zn(2+) contacts are provided by C395, C398, C413, and C418. The BRCT domain maps to 577–652 (VADAALSGLT…VRDEAWLESL (76 aa)).

It belongs to the NAD-dependent DNA ligase family. LigA subfamily. It depends on Mg(2+) as a cofactor. The cofactor is Mn(2+).

It catalyses the reaction NAD(+) + (deoxyribonucleotide)n-3'-hydroxyl + 5'-phospho-(deoxyribonucleotide)m = (deoxyribonucleotide)n+m + AMP + beta-nicotinamide D-nucleotide.. In terms of biological role, DNA ligase that catalyzes the formation of phosphodiester linkages between 5'-phosphoryl and 3'-hydroxyl groups in double-stranded DNA using NAD as a coenzyme and as the energy source for the reaction. It is essential for DNA replication and repair of damaged DNA. The protein is DNA ligase of Streptococcus pneumoniae (strain CGSP14).